The sequence spans 266 residues: Undecaprenyl-diphosphatase (266 aa).

A run of 7 helical transmembrane segments spans residues 41–61, 80–100, 107–127, 140–160, 180–200, 213–233, and 245–265; these read NLAF…VVLW, TKYV…GVFF, IFGS…ALLA, ISMK…MPGL, LAQF…LLDV, IPAL…CVAC, and LIYF…CTLL.

Belongs to the UppP family.

Its subcellular location is the cell inner membrane. The enzyme catalyses di-trans,octa-cis-undecaprenyl diphosphate + H2O = di-trans,octa-cis-undecaprenyl phosphate + phosphate + H(+). Catalyzes the dephosphorylation of undecaprenyl diphosphate (UPP). Confers resistance to bacitracin. The sequence is that of Undecaprenyl-diphosphatase from Parabacteroides distasonis (strain ATCC 8503 / DSM 20701 / CIP 104284 / JCM 5825 / NCTC 11152).